A 257-amino-acid chain; its full sequence is MDFLHHILSTYASFFDWKMWGEVLTDPVSWGLIGSLVVLEGLLSADNALVLAVMVKHLPEKQRKKALTYGLFGAYIFRFIFIGLGMLLIKFWWIKVLGALYLAWLVIKHFWIGEKEEEADGMKKNSWMVRTFGIFWATVISVELMDLAFSVDSILAAFAVSEKVWVLLIGGMLGILMMRTVAKVFLVLIDKIPELENTAFVLIGIIALKMAGSAFHYEMPHSVFFIIIIAAFAVTLIIHYINKQKQVREQTAASKEE.

Helical transmembrane passes span valine 23–leucine 43, phenylalanine 79–alanine 99, threonine 131–valine 151, phenylalanine 158–methionine 178, alanine 199–methionine 219, and histidine 221–isoleucine 241.

This sequence belongs to the TerC family.

Its subcellular location is the cell membrane. This is an uncharacterized protein from Bacillus subtilis (strain 168).